Consider the following 131-residue polypeptide: Peptide methionine sulfoxide reductase MsrB (131 aa).

The MsrB domain occupies 8 to 130 (LEEWRAMLDP…NSVCLDLVPR (123 aa)). Zn(2+)-binding residues include Cys47, Cys50, Cys96, and Cys99. Residue Cys119 is the Nucleophile of the active site.

This sequence belongs to the MsrB Met sulfoxide reductase family. The cofactor is Zn(2+).

It carries out the reaction L-methionyl-[protein] + [thioredoxin]-disulfide + H2O = L-methionyl-(R)-S-oxide-[protein] + [thioredoxin]-dithiol. The chain is Peptide methionine sulfoxide reductase MsrB from Pseudomonas fluorescens (strain Pf0-1).